A 380-amino-acid chain; its full sequence is Alcohol dehydrogenase 1 (380 aa).

Positions 48, 50, 70, 100, 103, 106, 114, and 178 each coordinate Zn(2+). The an alcohol site is built by Thr-50 and His-70. An NAD(+)-binding site is contributed by Thr-50. NAD(+) is bound by residues 203 to 208 (GLGAVG), Asp-227, Arg-232, Thr-273, Val-296, 296 to 298 (VGV), Phe-323, and Arg-373.

This sequence belongs to the zinc-containing alcohol dehydrogenase family. As to quaternary structure, homodimer. Homotetramer. It depends on Zn(2+) as a cofactor.

Its subcellular location is the cytoplasm. The catalysed reaction is a primary alcohol + NAD(+) = an aldehyde + NADH + H(+). It catalyses the reaction a secondary alcohol + NAD(+) = a ketone + NADH + H(+). The sequence is that of Alcohol dehydrogenase 1 (ADH1) from Solanum tuberosum (Potato).